The primary structure comprises 205 residues: Small ribosomal subunit protein uS4 (205 aa).

In terms of domain architecture, S4 RNA-binding spans 103-173; that stretch reads RRLQTIVMKK…LEKSKRAEAA (71 aa). The interval 174–205 is disordered; that stretch reads AREAAAEAAEAEQAAAQAAAPTPAPAAAAPKQ. Residues 179-205 are compositionally biased toward low complexity; it reads AEAAEAEQAAAQAAAPTPAPAAAAPKQ.

Belongs to the universal ribosomal protein uS4 family. In terms of assembly, part of the 30S ribosomal subunit. Contacts protein S5. The interaction surface between S4 and S5 is involved in control of translational fidelity.

Its function is as follows. One of the primary rRNA binding proteins, it binds directly to 16S rRNA where it nucleates assembly of the body of the 30S subunit. Functionally, with S5 and S12 plays an important role in translational accuracy. The protein is Small ribosomal subunit protein uS4 of Cenarchaeum symbiosum (strain A).